We begin with the raw amino-acid sequence, 739 residues long: Phosphoribosylformylglycinamidine synthase subunit PurL (739 aa).

The active site involves H54. Residues Y57 and K96 each coordinate ATP. Position 98 (E98) interacts with Mg(2+). Residues 99-102 and R121 each bind substrate; that span reads SHNH. The Proton acceptor role is filled by H100. A Mg(2+)-binding site is contributed by D122. Q245 is a substrate binding site. Residue D273 coordinates Mg(2+). Residue 317 to 319 participates in substrate binding; the sequence is ESQ. Residues D500 and G537 each coordinate ATP. Residue N538 participates in Mg(2+) binding. S540 contributes to the substrate binding site.

The protein belongs to the FGAMS family. Monomer. Part of the FGAM synthase complex composed of 1 PurL, 1 PurQ and 2 PurS subunits.

Its subcellular location is the cytoplasm. The catalysed reaction is N(2)-formyl-N(1)-(5-phospho-beta-D-ribosyl)glycinamide + L-glutamine + ATP + H2O = 2-formamido-N(1)-(5-O-phospho-beta-D-ribosyl)acetamidine + L-glutamate + ADP + phosphate + H(+). The protein operates within purine metabolism; IMP biosynthesis via de novo pathway; 5-amino-1-(5-phospho-D-ribosyl)imidazole from N(2)-formyl-N(1)-(5-phospho-D-ribosyl)glycinamide: step 1/2. Its function is as follows. Part of the phosphoribosylformylglycinamidine synthase complex involved in the purines biosynthetic pathway. Catalyzes the ATP-dependent conversion of formylglycinamide ribonucleotide (FGAR) and glutamine to yield formylglycinamidine ribonucleotide (FGAM) and glutamate. The FGAM synthase complex is composed of three subunits. PurQ produces an ammonia molecule by converting glutamine to glutamate. PurL transfers the ammonia molecule to FGAR to form FGAM in an ATP-dependent manner. PurS interacts with PurQ and PurL and is thought to assist in the transfer of the ammonia molecule from PurQ to PurL. This chain is Phosphoribosylformylglycinamidine synthase subunit PurL, found in Bacillus cereus (strain B4264).